The following is a 227-amino-acid chain: Venom allergen 5 (227 aa).

The signal sequence occupies residues 1–23; that stretch reads MEISGLVYLIIIVTIIDLPYGKA. Cystine bridges form between Cys27–Cys40, Cys31–Cys124, Cys49–Cys117, and Cys193–Cys210. Residues 68–212 enclose the SCP domain; that stretch reads LKEHNDFRQK…WHYHYLVCNY (145 aa).

Belongs to the CRISP family. Venom allergen 5-like subfamily. As to expression, expressed by the venom gland.

The protein localises to the secreted. The polypeptide is Venom allergen 5 (Vespula maculifrons (Eastern yellow jacket)).